Reading from the N-terminus, the 215-residue chain is Peptide methionine sulfoxide reductase MsrA (215 aa).

C58 is an active-site residue.

It belongs to the MsrA Met sulfoxide reductase family.

It catalyses the reaction L-methionyl-[protein] + [thioredoxin]-disulfide + H2O = L-methionyl-(S)-S-oxide-[protein] + [thioredoxin]-dithiol. The catalysed reaction is [thioredoxin]-disulfide + L-methionine + H2O = L-methionine (S)-S-oxide + [thioredoxin]-dithiol. In terms of biological role, has an important function as a repair enzyme for proteins that have been inactivated by oxidation. Catalyzes the reversible oxidation-reduction of methionine sulfoxide in proteins to methionine. In Pseudomonas aeruginosa (strain UCBPP-PA14), this protein is Peptide methionine sulfoxide reductase MsrA.